Here is a 200-residue protein sequence, read N- to C-terminus: Ribonuclease T2 (200 aa).

A disulfide bond links Cys-17 and Cys-22. The active site involves His-32. The cysteines at positions 42 and 89 are disulfide-linked. Asn-43 and Asn-73 each carry an N-linked (GlcNAc...) asparagine glycan. Catalysis depends on residues Glu-82 and His-86. N-linked (GlcNAc...) asparagine glycosylation is present at Asn-116. Disulfide bonds link Cys-152–Cys-188 and Cys-170–Cys-180.

This sequence belongs to the RNase T2 family.

Its subcellular location is the secreted. The protein resides in the lysosome lumen. It localises to the endoplasmic reticulum lumen. The protein localises to the mitochondrion intermembrane space. The enzyme catalyses a ribonucleotidyl-ribonucleotide-RNA + H2O = a 3'-end 3'-phospho-ribonucleotide-RNA + a 5'-end dephospho-ribonucleoside-RNA + H(+). It carries out the reaction an adenylyl-uridine-RNA = a 3'-end 2',3'-cyclophospho-AMP-RNA + a 5'-end dephospho-uridine-RNA. The catalysed reaction is a guanylyl-uridine-RNA = a 3'-end 2',3'-cyclophospho-GMP-RNA + a 5'-end dephospho-uridine-RNA. Its activity is regulated as follows. Inhibited by Zn(2+) and Cu(2+). Ribonuclease that plays an essential role in innate immune response by recognizing and degrading RNAs from microbial pathogens that are subsequently sensed by TLR8. Cleaves preferentially single-stranded RNA molecules between purine and uridine residues, which critically contributes to the supply of catabolic uridine and the generation of purine-2',3'-cyclophosphate-terminated oligoribonucleotides. In turn, RNase T2 degradation products promote the RNA-dependent activation of TLR8. In plasmacytoid dendritic cells, it cooperates with PLD3 or PLD4 5'-&gt;3' exonucleases to process RNA fragments and release 2',3'-cyclic guanosine monophosphate (2',3'-cGMP), a potent stimulatory ligand for TLR7. Also plays a key role in degradation of mitochondrial RNA and processing of non-coding RNA imported from the cytosol into mitochondria. Participates as well in degradation of mitochondrion-associated cytosolic rRNAs. This Sus scrofa (Pig) protein is Ribonuclease T2 (RNASET2).